Here is a 484-residue protein sequence, read N- to C-terminus: Ornithine decarboxylase (484 aa).

The residue at position 114 (lysine 114) is an N6-(pyridoxal phosphate)lysine. Pyridoxal 5'-phosphate contacts are provided by residues serine 245, glycine 282, and 315–318 (EPGR). Residue 381 to 382 (FD) coordinates substrate. Cysteine 422 acts as the Proton donor; shared with dimeric partner in catalysis. Aspartate 423 lines the substrate pocket. A pyridoxal 5'-phosphate-binding site is contributed by tyrosine 452.

The protein belongs to the Orn/Lys/Arg decarboxylase class-II family. In terms of assembly, homodimer. Only the dimer is catalytically active, as the active sites are constructed of residues from both monomers. Requires pyridoxal 5'-phosphate as cofactor.

The protein resides in the cytoplasm. It carries out the reaction L-ornithine + H(+) = putrescine + CO2. It participates in amine and polyamine biosynthesis; putrescine biosynthesis via L-ornithine pathway; putrescine from L-ornithine: step 1/1. With respect to regulation, inhibited by antizyme (AZ) OAZ1 in response to polyamine levels. AZ inhibits the assembly of the functional homodimer by binding to ODC monomers and targeting them for ubiquitin-independent proteolytic destruction by the 26S proteasome. Functionally, catalyzes the first and rate-limiting step of polyamine biosynthesis that converts ornithine into putrescine, which is the precursor for the polyamines, spermidine and spermine. Polyamines are essential for cell proliferation and are implicated in cellular processes, ranging from DNA replication to apoptosis. The polypeptide is Ornithine decarboxylase (spe-1) (Neurospora crassa (strain ATCC 24698 / 74-OR23-1A / CBS 708.71 / DSM 1257 / FGSC 987)).